A 290-amino-acid chain; its full sequence is 4-hydroxybenzoate octaprenyltransferase (290 aa).

Transmembrane regions (helical) follow at residues I24–I44, V48–N68, L98–I118, F142–I162, W171–I191, F214–E234, V239–I259, and A270–H290.

It belongs to the UbiA prenyltransferase family. It depends on Mg(2+) as a cofactor.

Its subcellular location is the cell inner membrane. It catalyses the reaction all-trans-octaprenyl diphosphate + 4-hydroxybenzoate = 4-hydroxy-3-(all-trans-octaprenyl)benzoate + diphosphate. Its pathway is cofactor biosynthesis; ubiquinone biosynthesis. Catalyzes the prenylation of para-hydroxybenzoate (PHB) with an all-trans polyprenyl group. Mediates the second step in the final reaction sequence of ubiquinone-8 (UQ-8) biosynthesis, which is the condensation of the polyisoprenoid side chain with PHB, generating the first membrane-bound Q intermediate 3-octaprenyl-4-hydroxybenzoate. The polypeptide is 4-hydroxybenzoate octaprenyltransferase (Blochmanniella pennsylvanica (strain BPEN)).